A 598-amino-acid chain; its full sequence is F-box/WD repeat-containing protein 8 (598 aa).

M1 carries the post-translational modification N-acetylmethionine. Residues 20–97 (SQALRRRRRL…PDRDATEPEP (78 aa)) form a disordered region. The span at 29–44 (LEAGERRSPRRPEAGA) shows a compositional bias: basic and acidic residues. Residues 51–65 (GYLGLAQGLLEGAGR) are compositionally biased toward low complexity. Residues 73 to 93 (RGGDRKDTSSRSRSPPDRDAT) show a composition bias toward basic and acidic residues. S84 is modified (phosphoserine). Residue S86 is modified to Phosphoserine; by MTOR. The F-box domain occupies 113–159 (PFFDVRLPYELAINIFQYLNRRELGLCAQVSKTWKVIAEDEVLWYRL). WD repeat units follow at residues 201–250 (AVSE…LESE), 259–299 (QPYV…FEHD), 300–340 (ARIQ…SEFE), 341–383 (VQKL…LHYV), 384–429 (YGQP…SKLG), 430–475 (NALG…SAHQ), 476–513 (LGVS…EVHS), and 514–561 (RHPV…AYEF).

As to quaternary structure, component of the Cul7-RING(FBXW8) complex consisting of CUL7, RBX1, SKP1 and FBXW8; within the complex interacts with CUL7 and SKP1. Interacts with GLMN isoform 1. Interacts with OBSL1, CUL1, CUL2, CCT6B, PFDN5, CCT2, CCT3, CCT6A, CCT7, VBP1, CCDC8, ARF1, TRIP13, PDCD5 and GORASP1. Interacts with MAP4K1/HPK1 (when autophosphorylated). Associated component of the 3M complex. Interacts with POUF51 (when phosphorylated on 'Ser-347'). In terms of processing, phosphorylation at Ser-86 by mTORC2 promotes FBXW8 stabilization, allowing its translocation to the cytosol in response to insulin. As to expression, widely expressed. Expressed at higher level in skeletal muscle, cartilage and lung.

It localises to the cytoplasm. The protein resides in the perinuclear region. Its subcellular location is the golgi apparatus. The protein localises to the cytosol. The protein operates within protein modification; protein ubiquitination. Functionally, substrate-recognition component of the Cul7-RING(FBXW8) ubiquitin ligase complex, which mediates the ubiquitination and subsequent proteasomal degradation of target proteins. The Cul7-RING(FBXW8) complex mediates ubiquitination and consequent degradation of GORASP1, acting as a component of the ubiquitin ligase pathway that regulates Golgi morphogenesis and dendrite patterning in brain. Mediates ubiquitination and degradation of IRS1 in a mTOR-dependent manner: the Cul7-RING(FBXW8) complex recognizes and binds IRS1 previously phosphorylated by S6 kinase (RPS6KB1 or RPS6KB2). The Cul7-RING(FBXW8) complex also mediates ubiquitination of MAP4K1/HPK1: recognizes and binds autophosphorylated MAP4K1/HPK1, leading to its degradation, thereby affecting cell proliferation and differentiation. The Cul7-RING(FBXW8) complex also mediates ubiquitination of phosphorylated cyclin-D1 (CCND1). The Cul7-RING(FBXW8) complex is however not a major regulator of CCND1 stability during the G1/S transition. Associated component of the 3M complex, suggesting that it mediates some of 3M complex functions. In Mus musculus (Mouse), this protein is F-box/WD repeat-containing protein 8 (Fbxw8).